The primary structure comprises 455 residues: MNLTDTVATILAILALTAGTGVFVAAEFSLTALDRSTVEANARGGTSRDRFIQRAHHRLSFQLSGAQLGISITTLATGYLTEPLVAELPHPGLVAVGMSDRVADGLITFFALVIVTSLSMVFGELVPKYLAVARPLRTARSVVAGQVLFSLLLTPAIRLTNGAANWIVRRLGIEPAEELRSARTPQELVSLVRSSARSGALDDATAWLMRRSLQFGALTAEELMTPRSKIVALQTDDTIADLVAAAAASGFSRFPVVEGDLDATVGIVHVKQVFEVPPGDRAHTLLTTVAEPVAVVPSTLDGDAVMAQVRASALQTAMVVDEYGGTAGMVTLEDLIEEIVGDVRDEHDDATPDVVAAGNGWRVSGLLRIDEVASATGYRAPDGPYETISGLVLRELGHIPVAGETVELTALDQDGLPDDSMRWLATVIQMDGRRIDLLELIKMGGHADPGSGRGR.

The CNNM transmembrane domain maps to Asn2 to Thr205. Helical transmembrane passes span Thr6–Ala26, Leu68–Leu88, Leu106–Val126, and Leu148–Val168. 2 CBS domains span residues Met224 to Leu285 and Leu286 to Glu346.

This sequence belongs to the UPF0053 family.

The protein localises to the cell membrane. This Mycobacterium tuberculosis (strain CDC 1551 / Oshkosh) protein is UPF0053 protein MT1890.